Reading from the N-terminus, the 269-residue chain is LOB domain-containing protein 6 (269 aa).

An LOB domain is found at 37–138 (SPCAACKFLR…QDLARAKFEL (102 aa)).

Belongs to the LOB domain-containing protein family.

It localises to the nucleus. Functionally, negative regulator of cell proliferation in the adaxial side of leaves. Regulates the formation of a symmetric lamina and the establishment of venation. The protein is LOB domain-containing protein 6 (LBD6) of Oryza sativa subsp. indica (Rice).